A 284-amino-acid polypeptide reads, in one-letter code: Aminoglycoside 6-adenylyltransferase (284 aa).

As to quaternary structure, homodimer.

The protein localises to the cytoplasm. It carries out the reaction streptomycin + ATP = 6-O-adenylylstreptomycin + diphosphate. It catalyses the reaction streptomycin + GTP = 6-O-guanylylstreptomycin + diphosphate. The catalysed reaction is streptidine + ATP = 6-O-adenylylstreptidine + diphosphate. Functionally, mediates bacterial resistance to streptomycin. Adenylates streptomycin on the O-6 residue. Adenylates streptidine on the O-6 residue. Does not act on spectinomycin, neomycin-B or kanamycin. Specific for ATP and GTP nucleotides incorporating a purine ring. No reaction with CTP or UTP. This Bacillus subtilis (strain 168) protein is Aminoglycoside 6-adenylyltransferase.